A 257-amino-acid chain; its full sequence is GTP cyclohydrolase III (257 aa).

Belongs to the archaeal-type GTP cyclohydrolase family.

It catalyses the reaction GTP + 3 H2O = 2-amino-5-formylamino-6-(5-phospho-D-ribosylamino)pyrimidin-4(3H)-one + 2 phosphate + 2 H(+). In terms of biological role, catalyzes the formation of 2-amino-5-formylamino-6-ribofuranosylamino-4(3H)-pyrimidinone ribonucleotide monophosphate and inorganic phosphate from GTP. Also has an independent pyrophosphate phosphohydrolase activity. This is GTP cyclohydrolase III from Halorubrum lacusprofundi (strain ATCC 49239 / DSM 5036 / JCM 8891 / ACAM 34).